The chain runs to 466 residues: Glutamate--tRNA ligase (466 aa).

The 'HIGH' region signature appears at Pro-10–Gly-20. Zn(2+)-binding residues include Cys-99, Cys-101, Cys-126, and Asp-128. The short motif at Arg-237–Arg-241 is the 'KMSKS' region element. Residue Lys-240 participates in ATP binding.

It belongs to the class-I aminoacyl-tRNA synthetase family. Glutamate--tRNA ligase type 1 subfamily. Monomer. Zn(2+) serves as cofactor.

The protein localises to the cytoplasm. The enzyme catalyses tRNA(Glu) + L-glutamate + ATP = L-glutamyl-tRNA(Glu) + AMP + diphosphate. Its function is as follows. Catalyzes the attachment of glutamate to tRNA(Glu) in a two-step reaction: glutamate is first activated by ATP to form Glu-AMP and then transferred to the acceptor end of tRNA(Glu). The sequence is that of Glutamate--tRNA ligase from Geobacter sulfurreducens (strain ATCC 51573 / DSM 12127 / PCA).